The following is a 378-amino-acid chain: Probable E3 ubiquitin-protein ligase LUL3 (378 aa).

A compositionally biased stretch (basic residues) spans 1–21; the sequence is MGISLSKRRRDNNNNHHHPHH. The disordered stretch occupies residues 1-79; that stretch reads MGISLSKRRR…PPSQISYRPY (79 aa). The N-myristoyl glycine moiety is linked to residue Gly-2. 2 stretches are compositionally biased toward pro residues: residues 29-38 and 55-72; these read DPPPQQPPPQ and SLPP…PPPS. Positions 164–283 are DAR2 domain; the sequence is FVFDALFDGS…GSFKVKVMKQ (120 aa). The RING-type; atypical zinc finger occupies 321 to 360; it reads CVICLTEPKDTAVMPCRHLCLCSDCAEELRFQTNKCPICR.

Belongs to the RING-type zinc finger family. LOG2 subfamily. Myristoylated (in vitro).

The enzyme catalyses S-ubiquitinyl-[E2 ubiquitin-conjugating enzyme]-L-cysteine + [acceptor protein]-L-lysine = [E2 ubiquitin-conjugating enzyme]-L-cysteine + N(6)-ubiquitinyl-[acceptor protein]-L-lysine.. It participates in protein modification; protein ubiquitination. Its function is as follows. Acts as an E3 ubiquitin-protein ligase, or as part of E3 complex, which accepts ubiquitin from specific E2 ubiquitin-conjugating enzymes and then transfers it to substrates (in vitro). This chain is Probable E3 ubiquitin-protein ligase LUL3 (LUL3), found in Arabidopsis thaliana (Mouse-ear cress).